The primary structure comprises 313 residues: tRNA dimethylallyltransferase (313 aa).

Position 11–18 (11–18 (GPTAAGKS)) interacts with ATP. Position 13-18 (13-18 (TAAGKS)) interacts with substrate. 3 interaction with substrate tRNA regions span residues 36–39 (DSAT), 160–164 (QRIQR), and 244–249 (RCVGYR).

Belongs to the IPP transferase family. Monomer. Mg(2+) is required as a cofactor.

The catalysed reaction is adenosine(37) in tRNA + dimethylallyl diphosphate = N(6)-dimethylallyladenosine(37) in tRNA + diphosphate. Functionally, catalyzes the transfer of a dimethylallyl group onto the adenine at position 37 in tRNAs that read codons beginning with uridine, leading to the formation of N6-(dimethylallyl)adenosine (i(6)A). This Bordetella pertussis (strain Tohama I / ATCC BAA-589 / NCTC 13251) protein is tRNA dimethylallyltransferase.